The following is a 576-amino-acid chain: Apolipoprotein N-acyltransferase 1 (576 aa).

Helical transmembrane passes span 15–35 (LILCFGIGIGTVFGLSPFSFF), 38–58 (GVFASISCIFLFFSLNRTSIW), 60–80 (AFLWLLILSQILNFTAFYWIP), 92–112 (FVSILFFFLYGLISHLKFFLF), 128–148 (YILLIFPAAGTLSDMITFQIF), 168–188 (ICGVYGLSFLLLFISSTFLIL), and 204–224 (IASLICIAFIYRFGLYRIGYI). The CN hydrolase domain maps to 236-538 (LSVLMIQPDT…TGTRAFSIRL (303 aa)). The active-site Proton acceptor is Glu285. Lys355 is an active-site residue. Cys446 serves as the catalytic Nucleophile. A helical transmembrane segment spans residues 549 to 569 (FGNSFLWIFCILILISRLIFV).

This sequence belongs to the CN hydrolase family. Apolipoprotein N-acyltransferase subfamily.

The protein resides in the cell inner membrane. It catalyses the reaction N-terminal S-1,2-diacyl-sn-glyceryl-L-cysteinyl-[lipoprotein] + a glycerophospholipid = N-acyl-S-1,2-diacyl-sn-glyceryl-L-cysteinyl-[lipoprotein] + a 2-acyl-sn-glycero-3-phospholipid + H(+). Its pathway is protein modification; lipoprotein biosynthesis (N-acyl transfer). Its function is as follows. Catalyzes the phospholipid dependent N-acylation of the N-terminal cysteine of apolipoprotein, the last step in lipoprotein maturation. This is Apolipoprotein N-acyltransferase 1 from Leptospira interrogans serogroup Icterohaemorrhagiae serovar copenhageni (strain Fiocruz L1-130).